Here is a 136-residue protein sequence, read N- to C-terminus: MDVEKLIAESKKAREQAYVPYSKFPVGAALLAEDGTIYHGCNIENSAYSMTNCAERTAFFKAVSDGVRSFKALAVVADTEGPVSPCGACRQVIAEFCNGSMPVYLTNLKGDIEETTVAKLLPGAFSKEDLSYAAEQ.

A CMP/dCMP-type deaminase domain is found at 1–128 (MDVEKLIAES…KLLPGAFSKE (128 aa)). Position 42-44 (42-44 (NIE)) interacts with substrate. Zn(2+) is bound at residue Cys-53. Glu-55 (proton donor) is an active-site residue. Positions 86 and 89 each coordinate Zn(2+).

Belongs to the cytidine and deoxycytidylate deaminase family. Zn(2+) is required as a cofactor.

The enzyme catalyses cytidine + H2O + H(+) = uridine + NH4(+). The catalysed reaction is 2'-deoxycytidine + H2O + H(+) = 2'-deoxyuridine + NH4(+). Its function is as follows. This enzyme scavenges exogenous and endogenous cytidine and 2'-deoxycytidine for UMP synthesis. The polypeptide is Cytidine deaminase (cdd) (Sporosarcina psychrophila (Bacillus psychrophilus)).